The following is a 142-amino-acid chain: Ribosome-binding factor A (142 aa).

Positions 118 to 130 are enriched in basic and acidic residues; the sequence is DKAKQKQAGREDD. A disordered region spans residues 118–142; that stretch reads DKAKQKQAGREDDTPSVDEQEKDTD. The segment covering 131–142 has biased composition (acidic residues); sequence TPSVDEQEKDTD.

The protein belongs to the RbfA family. Monomer. Binds 30S ribosomal subunits, but not 50S ribosomal subunits or 70S ribosomes.

The protein localises to the cytoplasm. In terms of biological role, one of several proteins that assist in the late maturation steps of the functional core of the 30S ribosomal subunit. Associates with free 30S ribosomal subunits (but not with 30S subunits that are part of 70S ribosomes or polysomes). Required for efficient processing of 16S rRNA. May interact with the 5'-terminal helix region of 16S rRNA. In Shewanella denitrificans (strain OS217 / ATCC BAA-1090 / DSM 15013), this protein is Ribosome-binding factor A.